Here is a 134-residue protein sequence, read N- to C-terminus: Salivary protein 15 Iric-1 (134 aa).

Residues 1-21 (MESFVAMKVVCITVLFVIVAV) form the signal peptide. The N-linked (GlcNAc...) asparagine glycan is linked to Asn22. A required for Borrelia OspC-binding region spans residues 48–67 (PSYIRNPQKLALELLEICKN). N-linked (GlcNAc...) asparagine glycosylation is found at Asn91 and Asn103. A CD4-binding region spans residues 115–134 (GPNGETCAEKSKCVGHIPGC).

Belongs to the salp15 family. Monomer. Interacts with host CD4. Interacts with host DC-SIGN (CD209). As to quaternary structure, (Microbial infection) Interacts with Borrelia outer surface protein C (OspC). As to expression, expressed in salivary glands. Detected in fed adult female.

It is found in the secreted. Salivary tick protein that downregulates host immune system by binding to both dendritic cells, and CD4(+) T cells. Specifically binds to the CD4 coreceptor on T cells. This interaction prevents the activation of the Src kinase, Lck, and its downstream substrate Zap-70, and results in deficient activation of PLCgamma1, the repression of calcium fluxes triggered by T-cell antigen receptor (TCR) ligation, and a subsequent reduction in interleukin-2 production. This salivary protein also binds to DC-SIGN (CD209) on dendritic cells (DC) and activates the Raf-1 kinase/MEK signaling pathway that results in down-regulating expression of pro-inflammatory cytokines. Furthermore, it inhibits T cell proliferation induced by DCs. In addition, it inhibits in vitro keratinocyte inflammation induced by Borrelia burgdorferi or by the major outer surface protein (OspC) of Borrelia. In addition, it downregulates chemokines and monocyte chemoattractant protein 1, as well as several antimicrobial peptides such as defensins, cathelicidin, psoriasin, and RNase 7. Apart from its immunomodulatory activities, it is also associated with protection of Borrelia spirochetes from antibody-mediated killing through its binding to OspC. In vivo, tests on different immune disease animal models show promising therapeutic results, e.g., in inhibiting HIV infection, experimental autoimmune encephalomyelitis, transplantation rejection, and asthma. Its function is as follows. (Microbial infection) Protects Borrelia garinii (strain VSBP) from host complement-mediated killing by binding to the surface of spirochetes and preventing deposition of host C5b-9 membrane attack complexes. Protects Borrelia garinii (strain A87S) from host complement-mediated killing. In terms of biological role, (Microbial infection) Partially protects Borrelia burgdorferi (strains VS215 and B31) from host complement-mediated killing. The chain is Salivary protein 15 Iric-1 from Ixodes ricinus (Common tick).